Reading from the N-terminus, the 392-residue chain is uncharacterized protein (392 aa).

The J domain maps to 7–76 (TEYYDLLGIS…RSQYDQFGKE (70 aa)). Ser-108 is modified (phosphoserine).

This is an uncharacterized protein from Schizosaccharomyces pombe (strain 972 / ATCC 24843) (Fission yeast).